Here is a 92-residue protein sequence, read N- to C-terminus: Precursor of CEP12 (92 aa).

A signal peptide spans 1–30 (MVNRDNSIVALSFFMLFLLVLHLHFETTTA). The propeptide occupies 31-70 (ARKPVRVFGPPSSIEWSPPSPPKDDFEWFEINIYKNIEQT). The segment at 70-92 (TAFRPTGQGPSQGIGHKDPPGAP) is disordered. 2 positions are modified to hydroxyproline: P74 and P79. Residues 86-92 (KDPPGAP) constitute a propeptide that is removed on maturation.

It belongs to the C-terminally encoded plant signaling peptide (CEP) family. Interacts with CEP receptors (e.g. CEPR1 and CEPR2). The mature small signaling peptide is generated by proteolytic processing of the longer precursor.

Its subcellular location is the secreted. It is found in the extracellular space. The protein resides in the apoplast. Extracellular signaling peptide that may regulate primary root growth rate and systemic nitrogen (N)-demand signaling. The chain is Precursor of CEP12 from Arabidopsis thaliana (Mouse-ear cress).